Consider the following 432-residue polypeptide: MGKSVAILGAQWGDEGKGKIVDLLTDRVKYVVRYQGGHNAGHTLIINGEKTVLRLIPSGILRENVTCLIGNGVVLSPAALMQEMGELESRGINVRDRLKISEACPLILPYHVAMDHAREAALGKNKIGTTGRGIGPAYEDKVSRRGLRVSDLFNREAFAEKLKTILEYYNFQLVHYYKVEPVDYQKTLDDVFAVADIITGMVADITTLLHKARANGDNILFEGAQGTMLDIDHGTYPFVTSSNTTAGGIATGSGFGPRNLDYVLGIIKAYCTRVGSGPFTTELFDEVGAEIARKGNEFGAVTGRPRRCGWFDAVAVRRAIQINSISGFCMTKLDVLDGFEELKICVAYKLQNGEIVEYSPLAAANWEGVEPIYETLPGWKENTFRVTKLEDLPQNAINYIKRIEEVLGVPVDILSTGPDRVETMILRDPFAA.

Residues 13–19 (GDEGKGK) and 41–43 (GHT) each bind GTP. Aspartate 14 functions as the Proton acceptor in the catalytic mechanism. Residues aspartate 14 and glycine 41 each coordinate Mg(2+). IMP contacts are provided by residues 14-17 (DEGK), 39-42 (NAGH), threonine 130, arginine 144, glutamine 225, threonine 240, and arginine 304. Catalysis depends on histidine 42, which acts as the Proton donor. A substrate-binding site is contributed by 300–306 (AVTGRPR). GTP contacts are provided by residues arginine 306, 332 to 334 (KLD), and 415 to 417 (STG).

It belongs to the adenylosuccinate synthetase family. As to quaternary structure, homodimer. Mg(2+) serves as cofactor.

The protein resides in the cytoplasm. The catalysed reaction is IMP + L-aspartate + GTP = N(6)-(1,2-dicarboxyethyl)-AMP + GDP + phosphate + 2 H(+). The protein operates within purine metabolism; AMP biosynthesis via de novo pathway; AMP from IMP: step 1/2. Functionally, plays an important role in the de novo pathway of purine nucleotide biosynthesis. Catalyzes the first committed step in the biosynthesis of AMP from IMP. The chain is Adenylosuccinate synthetase from Glaesserella parasuis serovar 5 (strain SH0165) (Haemophilus parasuis).